The chain runs to 190 residues: Spermatogenesis-associated protein 12 (190 aa).

As to expression, expressed in testis.

The chain is Spermatogenesis-associated protein 12 (SPATA12) from Homo sapiens (Human).